Consider the following 971-residue polypeptide: MELNDGNLQTLTEYLQKTLSADPAVRRPAEKFLESVEGNQNYPILLLAVLEKSQNEVIRVCSAVTFKNYIKRNWRIVEDEPNKISDPDRTAIKANIVNLMLTSPEQIQKQLSDAISIIGREDFPLKWPDLLTEMVNRFQSGDFHIINGVLRTAHSLFKRYRHEFKSNELWSEIKLVLDTFAQPLTELFKATIELCQTHATDINALKVLFSSLTLISKLFYSLNFQDLPEFFEDNMETWMTNFHNLLTLDNKLLQTDDEEEAGLLELLKSQICDNAALYAQKYDEEFQPYLPRFVTAIWNLLVTTGQEVKYDLLVSNAIQFLASVCERPHYKHLFEDQNVLTSICEKVIVPNMEFRSADEEAFEDNSEEYIIRDLEGSDIDTRRRAACDLVRGLCKFFEGPVTGIFSGYVNSMLAEYAKNPGVNWKHKDAAIYLVTSLASKAQTQKHGITQANELVNLSEFFLNHILIDLKSPNVNEFPVLKSDAIKYVMTFRSQLPKEQLLQAVPLLVSHLQAESIVQHTYAAHALERLFTMRGGNNTTLITPTEMAPFTEQLLNHLFKALAIPGSSENEYIMKAIMRSFSLLQEAIVPYIPTLIGQLTHKLLLVSKNPSKPHFNHYLFESLCLSIRITCKANPDTVSSFEEALFPVFTEILQNDVQEFVPYVFQVMSLLLEIHSNSIPSSYMALFPHLLQPVLWERTGNIPPLVRLLQAYLEKGAAAIANTASDKIPGLLGVFQKLIASKANDHQGFYLLNSIVEHMPAEAITQYRKQIFILLFQRLQSSKTTKFVKSFLVFINLYSVKYGAIALQEIFDDIQPKMFGMVVEKIVIPEVQKVSGQVEKKICAVGIIKILTECPAMMDTEYTKLWAPLLQALIGLFELPEDDSIPDDEHFIDIEDTPGYQTAFSQLAFAGKKEHDPIGDAVSNPKILLAQSLHKLSTACPGRVPSMLSTSLPTEALQFLQGYLQAATVQLV.

Positions A29–T102 constitute an Importin N-terminal domain.

The protein belongs to the XPO2/CSE1 family. In terms of assembly, interacts with cftr. As to expression, detected in larval gut, liver, exocrine pancreas and part of the brain and retina at 96 hpf.

The protein resides in the cytoplasm. Its subcellular location is the nucleus. It localises to the apical cell membrane. It is found in the basal cell membrane. The protein localises to the lateral cell membrane. Functionally, export receptor for importin alpha. Mediates importin-alpha re-export from the nucleus to the cytoplasm after import substrates have been released into the nucleoplasm. Negatively regulates fluid secretion and plays a role in fluid homeostasis by down-regulating cftr activity. This chain is Exportin-2 (cse1l), found in Danio rerio (Zebrafish).